Reading from the N-terminus, the 675-residue chain is Protein PALS1 (675 aa).

Residues 1 to 78 form a disordered region; sequence MTTSHMNGHV…RREEEGKKQE (78 aa). A required for the correct localization of PALS1 and PATJ at cell-cell contacts and the normal formation of tight junctions and adherens junctions region spans residues 1-345; it reads MTTSHMNGHV…QQIKPPPAKE (345 aa). Composition is skewed to basic and acidic residues over residues 10-36 and 54-78; these read VTEE…REMA and AQLE…KKQE. 2 positions are modified to phosphoserine: serine 14 and serine 25. Positions 21–140 are interaction with PARD6B; that stretch reads VDLASPEEHQ…LKHIQHTLVD (120 aa). Residues serine 83 and serine 84 each carry the phosphoserine modification. L27 domains lie at 120–177 and 179–235; these read KILE…NKAS and PFPL…MQLE. Positions 181 to 243 are interaction with LIN7C; the sequence is PLISNAQDLA…LEPFTDERVY (63 aa). Residues 256–336 form the PDZ domain; it reads IVRIEKARDI…TLTFVLIPSQ (81 aa). Positions 345–417 constitute an SH3 domain; it reads ETVIHVKAHF…PGKSFQQQRE (73 aa). The region spanning 479 to 660 is the Guanylate kinase-like domain; the sequence is KRPIILIGPQ…AYQELLRLIN (182 aa). 486–493 lines the ATP pocket; sequence GPQNCGQN.

It belongs to the MAGUK family. In terms of assembly, heterodimer with MPP1. Forms a heterotrimeric complex composed of PALS1, LIN7B and PATJ; the N-terminal L27 domain of PALS1 interacts with the L27 domain of PATJ and the C-terminal L27 domain of PALS1 interacts with the L27 domain of LIN7B. Component of a complex composed of PALS1, CRB1 and MPP4. Component of a complex whose core is composed of ARHGAP17, AMOT, PALS1, PATJ and PARD3/PAR3. Component of a complex composed of PALS1, CRB1 and EPB41L5. Within the complex, interacts (via HOOK domain) with EPB41L5 (via FERM domain), and interacts with CRB1 (via intracellular domain). Component of a complex composed of PALS1, MPP3 and CRB1; PALS1 acts as a bridging protein between MPP3 (via guanylate kinase-like domain) and CRB1. Component of a complex composed of CRB3, PALS1 and PATJ. As part of the Crumbs complex; interacts with WWP1, the interaction is enhanced by AMOTL2 and facilitates WWP1 localization to the plasma membrane. The Crumbs complex promotes monoubiquitination of AMOTL2 by WWP1, which activates the Hippo signaling pathway. Interacts (via PDZ domain) with PATJ (via N-terminus). Interacts with EZR. Interacts (via PDZ domain) with CRB1 (via C-terminal ERLI motif). While the PDZ domain is sufficient for interaction with CRB1, the adjacent SH3 and guanylate kinase-like domains are likely to contribute to a high affinity interaction. Interacts with WWTR1/TAZ (via WW domain). Interacts with MPP7. Interacts (via PDZ domain) with CRB3 (via C-terminus). Interacts with LIN7C. Interacts with MPDZ. Interacts with PARD6B. Interacts with SC6A1. Interacts with CDH5; the interaction promotes PALS1 localization to cell junctions and is required for CDH5-mediated vascular lumen formation and endothelial cell. Interacts with NPHP1 (via coiled coil and SH3 domains). Interacts with NPHP4. Interacts with CRB2.

The protein localises to the golgi apparatus. It is found in the cell membrane. Its subcellular location is the endomembrane system. It localises to the cell junction. The protein resides in the tight junction. The protein localises to the adherens junction. It is found in the cell projection. Its subcellular location is the axon. It localises to the perikaryon. The protein resides in the apical cell membrane. Functionally, plays a role in tight junction biogenesis and in the establishment of cell polarity in epithelial cells. Also involved in adherens junction biogenesis by ensuring correct localization of the exocyst complex protein EXOC4/SEC8 which allows trafficking of adherens junction structural component CDH1 to the cell surface. Plays a role through its interaction with CDH5 in vascular lumen formation and endothelial membrane polarity. Required during embryonic and postnatal retinal development. Required for the maintenance of cerebellar progenitor cells in an undifferentiated proliferative state, preventing premature differentiation, and is required for cerebellar histogenesis, fissure formation, cerebellar layer organization and cortical development. Plays a role in neuronal progenitor cell survival, potentially via promotion of mTOR signaling. Plays a role in the radial and longitudinal extension of the myelin sheath in Schwann cells. May modulate SC6A1/GAT1-mediated GABA uptake by stabilizing the transporter. May play a role in the T-cell receptor-mediated activation of NF-kappa-B. Required for localization of EZR to the apical membrane of parietal cells and may play a role in the dynamic remodeling of the apical cytoskeleton. Required for the normal polarized localization of the vesicular marker STX4. Required for the correct trafficking of the myelin proteins PMP22 and MAG. Involved in promoting phosphorylation and cytoplasmic retention of transcriptional coactivators YAP1 and WWTR1/TAZ which leads to suppression of TGFB1-dependent transcription of target genes such as CCN2/CTGF, SERPINE1/PAI1, SNAI1/SNAIL1 and SMAD7. In Canis lupus familiaris (Dog), this protein is Protein PALS1.